We begin with the raw amino-acid sequence, 90 residues long: Electron transfer flavoprotein regulatory factor 1 (90 aa).

Belongs to the complex I LYR family. In terms of assembly, homotetramer. Interacts with NDUFAB1. Interacts with ETFA. Interacts with ETFB.

Its subcellular location is the mitochondrion. In terms of biological role, acts as a regulator of the electron transfer flavoprotein by promoting the removal of flavin from the ETF holoenzyme (composed of ETFA and ETFB). The chain is Electron transfer flavoprotein regulatory factor 1 from Homo sapiens (Human).